The following is a 315-amino-acid chain: Protoheme IX farnesyltransferase 1 (315 aa).

8 helical membrane-spanning segments follow: residues 30-50 (PGII…AWIQ), 56-76 (GGPG…LVMA), 106-126 (IPPP…FIML), 132-152 (LTAV…TLWF), 162-182 (VGSF…TGYI), 186-206 (AILL…AIGI), 249-269 (LYID…AIWL), and 289-309 (FFYS…DSFI).

This sequence belongs to the UbiA prenyltransferase family. Protoheme IX farnesyltransferase subfamily. In terms of assembly, interacts with CtaA.

The protein localises to the cell membrane. The catalysed reaction is heme b + (2E,6E)-farnesyl diphosphate + H2O = Fe(II)-heme o + diphosphate. The protein operates within porphyrin-containing compound metabolism; heme O biosynthesis; heme O from protoheme: step 1/1. Its function is as follows. Converts heme B (protoheme IX) to heme O by substitution of the vinyl group on carbon 2 of heme B porphyrin ring with a hydroxyethyl farnesyl side group. The polypeptide is Protoheme IX farnesyltransferase 1 (Bacillus velezensis (strain DSM 23117 / BGSC 10A6 / LMG 26770 / FZB42) (Bacillus amyloliquefaciens subsp. plantarum)).